We begin with the raw amino-acid sequence, 536 residues long: Arginine--tRNA ligase (536 aa).

The 'HIGH' region motif lies at 119–129 (ANPTGFLHIGH).

This sequence belongs to the class-I aminoacyl-tRNA synthetase family. As to quaternary structure, monomer.

It localises to the cytoplasm. It carries out the reaction tRNA(Arg) + L-arginine + ATP = L-arginyl-tRNA(Arg) + AMP + diphosphate. This is Arginine--tRNA ligase from Mycoplasma mobile (strain ATCC 43663 / 163K / NCTC 11711) (Mesomycoplasma mobile).